A 396-amino-acid polypeptide reads, in one-letter code: S-adenosylmethionine synthase (396 aa).

His-16 serves as a coordination point for ATP. Position 18 (Asp-18) interacts with Mg(2+). Glu-44 is a K(+) binding site. Positions 57 and 100 each coordinate L-methionine. The tract at residues 100-110 is flexible loop; it reads QSPDIAQGVDD. Residues 174–176, 241–242, Asp-250, 256–257, Ala-273, and Lys-277 contribute to the ATP site; these read DAK, RF, and RK. Asp-250 lines the L-methionine pocket. Lys-281 is an L-methionine binding site.

Belongs to the AdoMet synthase family. In terms of assembly, homotetramer; dimer of dimers. Mg(2+) is required as a cofactor. It depends on K(+) as a cofactor.

The protein localises to the cytoplasm. The catalysed reaction is L-methionine + ATP + H2O = S-adenosyl-L-methionine + phosphate + diphosphate. The protein operates within amino-acid biosynthesis; S-adenosyl-L-methionine biosynthesis; S-adenosyl-L-methionine from L-methionine: step 1/1. In terms of biological role, catalyzes the formation of S-adenosylmethionine (AdoMet) from methionine and ATP. The overall synthetic reaction is composed of two sequential steps, AdoMet formation and the subsequent tripolyphosphate hydrolysis which occurs prior to release of AdoMet from the enzyme. The protein is S-adenosylmethionine synthase of Pediococcus pentosaceus (strain ATCC 25745 / CCUG 21536 / LMG 10740 / 183-1w).